A 247-amino-acid chain; its full sequence is Flavin-dependent thymidylate synthase (247 aa).

Residues 1–237 form the ThyX domain; it reads MDVKLLEATD…PKTFEYYEQE (237 aa). DUMP is bound by residues 85–88, 98–100, and Arg-176; these read QITR and SMR. Position 88–90 (88–90) interacts with FAD; it reads RHR. A ThyX motif motif is present at residues 88-98; sequence RHRHVSFDVQS. FAD contacts are provided by residues 192–194 and His-198; that span reads NAR. Residue Arg-203 coordinates dUMP. The Involved in ionization of N3 of dUMP, leading to its activation role is filled by Arg-203.

Belongs to the thymidylate synthase ThyX family. In terms of assembly, homotetramer. It depends on FAD as a cofactor.

The enzyme catalyses dUMP + (6R)-5,10-methylene-5,6,7,8-tetrahydrofolate + NADPH + H(+) = dTMP + (6S)-5,6,7,8-tetrahydrofolate + NADP(+). It functions in the pathway pyrimidine metabolism; dTTP biosynthesis. Functionally, catalyzes the reductive methylation of 2'-deoxyuridine-5'-monophosphate (dUMP) to 2'-deoxythymidine-5'-monophosphate (dTMP) while utilizing 5,10-methylenetetrahydrofolate (mTHF) as the methyl donor, and NADPH and FADH(2) as the reductant. The chain is Flavin-dependent thymidylate synthase from Haloarcula marismortui (strain ATCC 43049 / DSM 3752 / JCM 8966 / VKM B-1809) (Halobacterium marismortui).